We begin with the raw amino-acid sequence, 83 residues long: Exodeoxyribonuclease 7 small subunit (83 aa).

The protein belongs to the XseB family. Heterooligomer composed of large and small subunits.

It is found in the cytoplasm. It catalyses the reaction Exonucleolytic cleavage in either 5'- to 3'- or 3'- to 5'-direction to yield nucleoside 5'-phosphates.. Its function is as follows. Bidirectionally degrades single-stranded DNA into large acid-insoluble oligonucleotides, which are then degraded further into small acid-soluble oligonucleotides. The sequence is that of Exodeoxyribonuclease 7 small subunit from Sinorhizobium medicae (strain WSM419) (Ensifer medicae).